Here is a 321-residue protein sequence, read N- to C-terminus: Torsin-2A (321 aa).

The signal sequence occupies residues 1-27; that stretch reads MAVARHGCPPWGSILGLLVLALAAAAA. 93 to 100 provides a ligand contact to ATP; that stretch reads GWTGTGKS. N-linked (GlcNAc...) asparagine glycosylation is present at N149.

It belongs to the ClpA/ClpB family. Torsin subfamily. In terms of assembly, homohexamer. Interacts with TOR1AIP1.

The protein resides in the endoplasmic reticulum lumen. This Rattus norvegicus (Rat) protein is Torsin-2A (Tor2a).